A 662-amino-acid polypeptide reads, in one-letter code: Probable lysophospholipase 3 (662 aa).

A signal peptide spans 1–19; it reads MLFNCFGILALLQILPALA. N74, N127, N162, N196, N266, N274, N303, N376, N406, N411, N483, N518, N523, N547, N556, N574, N596, and N613 each carry an N-linked (GlcNAc...) asparagine glycan. A PLA2c domain is found at 76–617; it reads TCPSDYMLRP…EQYCWNGTTV (542 aa).

It belongs to the lysophospholipase family.

The protein resides in the secreted. It catalyses the reaction a 1-acyl-sn-glycero-3-phosphocholine + H2O = sn-glycerol 3-phosphocholine + a fatty acid + H(+). Functionally, catalyzes the release of fatty acids from lysophospholipids. The polypeptide is Probable lysophospholipase 3 (plb3) (Schizosaccharomyces pombe (strain 972 / ATCC 24843) (Fission yeast)).